The chain runs to 602 residues: UvrABC system protein C (602 aa).

Residues D15 to I92 enclose the GIY-YIG domain. A UVR domain is found at G197–T232.

Belongs to the UvrC family. In terms of assembly, interacts with UvrB in an incision complex.

Its subcellular location is the cytoplasm. In terms of biological role, the UvrABC repair system catalyzes the recognition and processing of DNA lesions. UvrC both incises the 5' and 3' sides of the lesion. The N-terminal half is responsible for the 3' incision and the C-terminal half is responsible for the 5' incision. In Lacticaseibacillus paracasei (strain ATCC 334 / BCRC 17002 / CCUG 31169 / CIP 107868 / KCTC 3260 / NRRL B-441) (Lactobacillus paracasei), this protein is UvrABC system protein C.